A 214-amino-acid chain; its full sequence is MRIMLLGSPGSGKGTQAKYLTERFGIPQISTGDMLRAAVREGTPLGMEAKKIMDAGQLVSDSIILGLIKERIAAPDCANGFLLDGFPRTIVQADALAELGVTLDHVVEIAVDDEEIVRRLSGRRVHPASGRTYHVVFNPPKVEGRDDETGEPLVQREDDKEETIRRRLEIYHVQTKPLVDYYRSKAAQGGVKFHTVPGVGSVEAIRDAVLASLA.

10–15 (GSGKGT) contacts ATP. An NMP region spans residues 30 to 59 (STGDMLRAAVREGTPLGMEAKKIMDAGQLV). Residues Thr31, Arg36, 57 to 59 (QLV), 85 to 88 (GFPR), and Gln92 each bind AMP. Residues 122-159 (GRRVHPASGRTYHVVFNPPKVEGRDDETGEPLVQREDD) form an LID region. ATP-binding positions include Arg123 and 132 to 133 (TY). AMP-binding residues include Arg156 and Arg167. Gly200 serves as a coordination point for ATP.

The protein belongs to the adenylate kinase family. In terms of assembly, monomer.

The protein localises to the cytoplasm. It carries out the reaction AMP + ATP = 2 ADP. Its pathway is purine metabolism; AMP biosynthesis via salvage pathway; AMP from ADP: step 1/1. Its function is as follows. Catalyzes the reversible transfer of the terminal phosphate group between ATP and AMP. Plays an important role in cellular energy homeostasis and in adenine nucleotide metabolism. This is Adenylate kinase from Methylococcus capsulatus (strain ATCC 33009 / NCIMB 11132 / Bath).